The sequence spans 104 residues: Chitin-binding protein 2 (104 aa).

As to quaternary structure, oligomer in an unreduced state. In terms of processing, glycosylated.

Chitin-binding protein. Has antifungal activity against C.krusei, C.albicans, C.tropicalis and C.parapsilosis. Inhibits C.albicans by increasing cell membrane permeability and production of reactive oxygen species. Has no hemagglutinating activity. The polypeptide is Chitin-binding protein 2 (Moringa oleifera (Horseradish tree)).